The following is an 83-amino-acid chain: Small cysteine-rich protein 3 (83 aa).

An N-terminal signal peptide occupies residues 1 to 21 (MGVKLNICLLLLLVAIISSQG). Residues 22–39 (FNLRKKEDSKDEKPFGNY) constitute a propeptide that is removed on maturation. Over residues 25–35 (RKKEDSKDEKP) the composition is skewed to basic and acidic residues. The disordered stretch occupies residues 25–44 (RKKEDSKDEKPFGNYRRGSP).

Belongs to the Cnidaria small cysteine-rich protein (SCRiP) family. alpha subfamily. In terms of processing, contains 4 disulfide bonds.

It localises to the secreted. Its subcellular location is the nematocyst. This recombinant protein induces severe neurotoxicity on zebrafish larvae (Danio rerio) at a concentration of 230 mg/ml, but does not show toxicity when injected in blowfly larvae (Sarcophaga falculata). All fish incubated with this protein died within 16 hours of exposure. Has also been claimed to be implied in calcification, but this function seems improbable. In Acropora millepora (Staghorn coral), this protein is Small cysteine-rich protein 3.